A 331-amino-acid chain; its full sequence is MKQTVYTASPESQQIHVWSLEADGKLTLVQVVDAPGQVQPMVVSPNKEYLYVGVRPEFRVLAYRITPDNGALTFAGEAALPGSPTHISTDHHGRFVFSASYNQGCVSVTPLQDGLPGETVTVVEGLEGCHSANISPDNRTLWVPALKQDRICLFTLSEDGFLSAQEPAEVTTVDGAGPRHMVFHPNQQYGYCVNELNSSVDVWELKDPNGNIECVQTLDMMPQDFTGVRWAADIHITPDGRHLYACDRTASIITVFSVSEDGSVLAVEGYQPTETQPRGFNLDHSGKYLIAAGQKSHHIAVYEIEGEQGLLHEKGRYAVGQGPMWVVVNAH.

It belongs to the cycloisomerase 2 family.

It catalyses the reaction 6-phospho-D-glucono-1,5-lactone + H2O = 6-phospho-D-gluconate + H(+). The protein operates within carbohydrate degradation; pentose phosphate pathway; D-ribulose 5-phosphate from D-glucose 6-phosphate (oxidative stage): step 2/3. In terms of biological role, catalyzes the hydrolysis of 6-phosphogluconolactone to 6-phosphogluconate. The polypeptide is 6-phosphogluconolactonase (Klebsiella pneumoniae (strain 342)).